Here is a 178-residue protein sequence, read N- to C-terminus: UPF0114 protein in repA1-repA2 intergenic region (178 aa).

Transmembrane regions (helical) follow at residues 14-34 (WLIFPIYLGLSFCLILLTLKF), 53-73 (LILVILSLIDIVLVGGLLVMV), and 136-156 (WYVIIHLTFVVSAGGMAYIDR).

The protein belongs to the UPF0114 family.

It localises to the cell membrane. This is UPF0114 protein in repA1-repA2 intergenic region from Buchnera aphidicola subsp. Tetraneura caerulescens.